Consider the following 191-residue polypeptide: Adenylate kinase (191 aa).

ATP is bound at residue 11 to 16; that stretch reads GAGKGT. The interval 31-60 is NMP; that stretch reads STGDILRSNVAERSPLGIKAKDYMDKGDLV. AMP-binding positions include threonine 32, arginine 37, 58-60, 86-89, and glutamine 93; these read DLV and GFPR. An LID region spans residues 132–138; sequence SRKREDD. Residue arginine 133 coordinates ATP. 2 residues coordinate AMP: arginine 135 and arginine 146. Residue asparagine 174 participates in ATP binding.

This sequence belongs to the adenylate kinase family. As to quaternary structure, monomer.

The protein localises to the cytoplasm. It catalyses the reaction AMP + ATP = 2 ADP. It functions in the pathway purine metabolism; AMP biosynthesis via salvage pathway; AMP from ADP: step 1/1. In terms of biological role, catalyzes the reversible transfer of the terminal phosphate group between ATP and AMP. Plays an important role in cellular energy homeostasis and in adenine nucleotide metabolism. The sequence is that of Adenylate kinase from Trichodesmium erythraeum (strain IMS101).